Reading from the N-terminus, the 248-residue chain is Probable transcriptional regulatory protein Mpop_0922 (248 aa).

This sequence belongs to the TACO1 family.

It localises to the cytoplasm. The sequence is that of Probable transcriptional regulatory protein Mpop_0922 from Methylorubrum populi (strain ATCC BAA-705 / NCIMB 13946 / BJ001) (Methylobacterium populi).